Consider the following 87-residue polypeptide: Small ribosomal subunit protein bS20 (87 aa).

This sequence belongs to the bacterial ribosomal protein bS20 family.

Its function is as follows. Binds directly to 16S ribosomal RNA. In Corynebacterium jeikeium (strain K411), this protein is Small ribosomal subunit protein bS20.